Reading from the N-terminus, the 680-residue chain is DNA ligase (680 aa).

Residues Asp35–Asp39, Ser86–Leu87, and Glu111 contribute to the NAD(+) site. Lys113 (N6-AMP-lysine intermediate) is an active-site residue. Residues Arg134, Glu174, Lys290, and Lys314 each contribute to the NAD(+) site. Residues Cys408, Cys411, Cys427, and Cys433 each coordinate Zn(2+). A BRCT domain is found at Val597–Glu680.

Belongs to the NAD-dependent DNA ligase family. LigA subfamily. Mg(2+) is required as a cofactor. Mn(2+) serves as cofactor.

It catalyses the reaction NAD(+) + (deoxyribonucleotide)n-3'-hydroxyl + 5'-phospho-(deoxyribonucleotide)m = (deoxyribonucleotide)n+m + AMP + beta-nicotinamide D-nucleotide.. Its function is as follows. DNA ligase that catalyzes the formation of phosphodiester linkages between 5'-phosphoryl and 3'-hydroxyl groups in double-stranded DNA using NAD as a coenzyme and as the energy source for the reaction. It is essential for DNA replication and repair of damaged DNA. The sequence is that of DNA ligase from Corynebacterium glutamicum (strain ATCC 13032 / DSM 20300 / JCM 1318 / BCRC 11384 / CCUG 27702 / LMG 3730 / NBRC 12168 / NCIMB 10025 / NRRL B-2784 / 534).